Consider the following 296-residue polypeptide: 4-hydroxy-tetrahydrodipicolinate synthase (296 aa).

Residue threonine 49 coordinates pyruvate. The active-site Proton donor/acceptor is tyrosine 137. Lysine 166 (schiff-base intermediate with substrate) is an active-site residue. Isoleucine 208 provides a ligand contact to pyruvate.

Belongs to the DapA family. In terms of assembly, homotetramer; dimer of dimers.

It localises to the cytoplasm. The enzyme catalyses L-aspartate 4-semialdehyde + pyruvate = (2S,4S)-4-hydroxy-2,3,4,5-tetrahydrodipicolinate + H2O + H(+). Its pathway is amino-acid biosynthesis; L-lysine biosynthesis via DAP pathway; (S)-tetrahydrodipicolinate from L-aspartate: step 3/4. Its function is as follows. Catalyzes the condensation of (S)-aspartate-beta-semialdehyde [(S)-ASA] and pyruvate to 4-hydroxy-tetrahydrodipicolinate (HTPA). The protein is 4-hydroxy-tetrahydrodipicolinate synthase of Chlorobaculum parvum (strain DSM 263 / NCIMB 8327) (Chlorobium vibrioforme subsp. thiosulfatophilum).